The sequence spans 97 residues: Small ribosomal subunit protein bS20 (97 aa).

The protein belongs to the bacterial ribosomal protein bS20 family.

In terms of biological role, binds directly to 16S ribosomal RNA. The polypeptide is Small ribosomal subunit protein bS20 (Prochlorococcus marinus subsp. pastoris (strain CCMP1986 / NIES-2087 / MED4)).